The chain runs to 212 residues: Peptide methionine sulfoxide reductase MsrA (212 aa).

Cys-52 is an active-site residue.

This sequence belongs to the MsrA Met sulfoxide reductase family.

It catalyses the reaction L-methionyl-[protein] + [thioredoxin]-disulfide + H2O = L-methionyl-(S)-S-oxide-[protein] + [thioredoxin]-dithiol. The enzyme catalyses [thioredoxin]-disulfide + L-methionine + H2O = L-methionine (S)-S-oxide + [thioredoxin]-dithiol. Has an important function as a repair enzyme for proteins that have been inactivated by oxidation. Catalyzes the reversible oxidation-reduction of methionine sulfoxide in proteins to methionine. This is Peptide methionine sulfoxide reductase MsrA from Escherichia coli (strain ATCC 8739 / DSM 1576 / NBRC 3972 / NCIMB 8545 / WDCM 00012 / Crooks).